The primary structure comprises 379 residues: Succinyl-diaminopimelate desuccinylase (379 aa).

Zn(2+) is bound at residue histidine 70. Aspartate 72 is a catalytic residue. Aspartate 103 is a Zn(2+) binding site. The Proton acceptor role is filled by glutamate 137. Positions 138, 166, and 352 each coordinate Zn(2+).

It belongs to the peptidase M20A family. DapE subfamily. Homodimer. The cofactor is Zn(2+). Co(2+) is required as a cofactor.

The catalysed reaction is N-succinyl-(2S,6S)-2,6-diaminopimelate + H2O = (2S,6S)-2,6-diaminopimelate + succinate. Its pathway is amino-acid biosynthesis; L-lysine biosynthesis via DAP pathway; LL-2,6-diaminopimelate from (S)-tetrahydrodipicolinate (succinylase route): step 3/3. Catalyzes the hydrolysis of N-succinyl-L,L-diaminopimelic acid (SDAP), forming succinate and LL-2,6-diaminopimelate (DAP), an intermediate involved in the bacterial biosynthesis of lysine and meso-diaminopimelic acid, an essential component of bacterial cell walls. The sequence is that of Succinyl-diaminopimelate desuccinylase from Burkholderia ambifaria (strain ATCC BAA-244 / DSM 16087 / CCUG 44356 / LMG 19182 / AMMD) (Burkholderia cepacia (strain AMMD)).